A 337-amino-acid chain; its full sequence is Nucleoid-associated protein Avin_11450 (337 aa).

It belongs to the YejK family.

It is found in the cytoplasm. Its subcellular location is the nucleoid. This chain is Nucleoid-associated protein Avin_11450, found in Azotobacter vinelandii (strain DJ / ATCC BAA-1303).